The primary structure comprises 95 residues: Co-chaperonin GroES (95 aa).

The protein belongs to the GroES chaperonin family. As to quaternary structure, heptamer of 7 subunits arranged in a ring. Interacts with the chaperonin GroEL.

The protein resides in the cytoplasm. Together with the chaperonin GroEL, plays an essential role in assisting protein folding. The GroEL-GroES system forms a nano-cage that allows encapsulation of the non-native substrate proteins and provides a physical environment optimized to promote and accelerate protein folding. GroES binds to the apical surface of the GroEL ring, thereby capping the opening of the GroEL channel. This Syntrophotalea carbinolica (strain DSM 2380 / NBRC 103641 / GraBd1) (Pelobacter carbinolicus) protein is Co-chaperonin GroES.